Reading from the N-terminus, the 2293-residue chain is Protein Ycf2 B (2293 aa).

1647 to 1654 (GSIGTGRS) is a binding site for ATP.

The protein belongs to the Ycf2 family.

It localises to the plastid. It is found in the chloroplast stroma. Functionally, probable ATPase of unknown function. Its presence in a non-photosynthetic plant (Epifagus virginiana) and experiments in tobacco indicate that it has an essential function which is probably not related to photosynthesis. In Crucihimalaya wallichii (Rock-cress), this protein is Protein Ycf2 B.